The primary structure comprises 531 residues: Endoglucanase 7 (531 aa).

Residues 1–27 form the signal peptide; sequence MRGRALVLVAALLLQLLLLAAAGGAGA. The active-site Nucleophile is the D89. Catalysis depends on residues H430, D482, and E491.

This sequence belongs to the glycosyl hydrolase 9 (cellulase E) family. In terms of tissue distribution, ubiquitous.

The protein localises to the secreted. The catalysed reaction is Endohydrolysis of (1-&gt;4)-beta-D-glucosidic linkages in cellulose, lichenin and cereal beta-D-glucans.. This chain is Endoglucanase 7 (GLU10), found in Oryza sativa subsp. japonica (Rice).